We begin with the raw amino-acid sequence, 390 residues long: Putative 8-amino-7-oxononanoate synthase (390 aa).

A substrate-binding site is contributed by Arg-20. 107–108 (GY) lines the pyridoxal 5'-phosphate pocket. His-132 contacts substrate. Pyridoxal 5'-phosphate contacts are provided by residues Ser-181, 206–209 (DDAH), and 237–240 (TLGK). Lys-240 is modified (N6-(pyridoxal phosphate)lysine). Substrate is bound at residue Thr-356.

This sequence belongs to the class-II pyridoxal-phosphate-dependent aminotransferase family. BioF subfamily. In terms of assembly, homodimer. Pyridoxal 5'-phosphate is required as a cofactor.

It catalyses the reaction 6-carboxyhexanoyl-[ACP] + L-alanine + H(+) = (8S)-8-amino-7-oxononanoate + holo-[ACP] + CO2. It participates in cofactor biosynthesis; biotin biosynthesis. Functionally, catalyzes the decarboxylative condensation of pimeloyl-[acyl-carrier protein] and L-alanine to produce 8-amino-7-oxononanoate (AON), [acyl-carrier protein], and carbon dioxide. In Syntrophotalea carbinolica (strain DSM 2380 / NBRC 103641 / GraBd1) (Pelobacter carbinolicus), this protein is Putative 8-amino-7-oxononanoate synthase (bioF).